The following is an 86-amino-acid chain: RNA-binding protein Hfq (86 aa).

Positions 10–71 constitute a Sm domain; sequence DLFLNNARKE…VSTIQPGKYI (62 aa).

This sequence belongs to the Hfq family. As to quaternary structure, homohexamer.

RNA chaperone that binds small regulatory RNA (sRNAs) and mRNAs to facilitate mRNA translational regulation in response to envelope stress, environmental stress and changes in metabolite concentrations. Also binds with high specificity to tRNAs. This Clostridioides difficile (strain 630) (Peptoclostridium difficile) protein is RNA-binding protein Hfq.